The following is a 249-amino-acid chain: tRNA pseudouridine synthase A (249 aa).

Catalysis depends on Asp53, which acts as the Nucleophile. Residue Tyr111 coordinates substrate.

The protein belongs to the tRNA pseudouridine synthase TruA family. In terms of assembly, homodimer.

It catalyses the reaction uridine(38/39/40) in tRNA = pseudouridine(38/39/40) in tRNA. In terms of biological role, formation of pseudouridine at positions 38, 39 and 40 in the anticodon stem and loop of transfer RNAs. The chain is tRNA pseudouridine synthase A from Streptococcus pyogenes serotype M3 (strain ATCC BAA-595 / MGAS315).